Consider the following 225-residue polypeptide: NAD(P)H-quinone oxidoreductase subunit K, chloroplastic (225 aa).

The [4Fe-4S] cluster site is built by Cys-43, Cys-44, Cys-108, and Cys-139.

The protein belongs to the complex I 20 kDa subunit family. NDH is composed of at least 16 different subunits, 5 of which are encoded in the nucleus. It depends on [4Fe-4S] cluster as a cofactor.

The protein resides in the plastid. It is found in the chloroplast thylakoid membrane. The enzyme catalyses a plastoquinone + NADH + (n+1) H(+)(in) = a plastoquinol + NAD(+) + n H(+)(out). The catalysed reaction is a plastoquinone + NADPH + (n+1) H(+)(in) = a plastoquinol + NADP(+) + n H(+)(out). In terms of biological role, NDH shuttles electrons from NAD(P)H:plastoquinone, via FMN and iron-sulfur (Fe-S) centers, to quinones in the photosynthetic chain and possibly in a chloroplast respiratory chain. The immediate electron acceptor for the enzyme in this species is believed to be plastoquinone. Couples the redox reaction to proton translocation, and thus conserves the redox energy in a proton gradient. The sequence is that of NAD(P)H-quinone oxidoreductase subunit K, chloroplastic from Manihot esculenta (Cassava).